Here is a 438-residue protein sequence, read N- to C-terminus: ATP synthase subunit alpha, chloroplastic (438 aa).

170–177 (GDRQTGKT) serves as a coordination point for ATP.

Belongs to the ATPase alpha/beta chains family. F-type ATPases have 2 components, CF(1) - the catalytic core - and CF(0) - the membrane proton channel. CF(1) has five subunits: alpha(3), beta(3), gamma(1), delta(1), epsilon(1). CF(0) has four main subunits: a, b, b' and c.

It localises to the plastid. Its subcellular location is the chloroplast thylakoid membrane. It carries out the reaction ATP + H2O + 4 H(+)(in) = ADP + phosphate + 5 H(+)(out). Produces ATP from ADP in the presence of a proton gradient across the membrane. The alpha chain is a regulatory subunit. This Ochrosphaera neapolitana protein is ATP synthase subunit alpha, chloroplastic.